The following is a 291-amino-acid chain: ATP synthase gamma chain (291 aa).

The protein belongs to the ATPase gamma chain family. In terms of assembly, F-type ATPases have 2 components, CF(1) - the catalytic core - and CF(0) - the membrane proton channel. CF(1) has five subunits: alpha(3), beta(3), gamma(1), delta(1), epsilon(1). CF(0) has three main subunits: a, b and c.

It localises to the cell inner membrane. Its function is as follows. Produces ATP from ADP in the presence of a proton gradient across the membrane. The gamma chain is believed to be important in regulating ATPase activity and the flow of protons through the CF(0) complex. In Neisseria meningitidis serogroup C (strain 053442), this protein is ATP synthase gamma chain.